We begin with the raw amino-acid sequence, 163 residues long: COP9 signalosome complex subunit 9 (163 aa).

In terms of domain architecture, PCI spans Glu-5–Arg-120.

As to quaternary structure, component of a COP9 signalosome-like (CSN) complex.

It localises to the cytoplasm. Its subcellular location is the nucleus. Functionally, component of the COP9 signalosome (CSN) complex that acts as a regulator of the ubiquitin (Ubl) conjugation pathway by mediating the deneddylation of the cullin subunit of SCF-type E3 ubiquitin-protein ligase complexes. The complex is involved in the regulation of the mating pheromone response. In Eremothecium gossypii (strain ATCC 10895 / CBS 109.51 / FGSC 9923 / NRRL Y-1056) (Yeast), this protein is COP9 signalosome complex subunit 9 (CSN9).